Reading from the N-terminus, the 224-residue chain is Haloacetate dehalogenase H-2 (224 aa).

Aspartate 10 (nucleophile) is an active-site residue.

Belongs to the HAD-like hydrolase superfamily. S-2-haloalkanoic acid dehalogenase family.

It catalyses the reaction a haloacetate + H2O = a halide anion + glycolate + H(+). In Moraxella sp. (strain B), this protein is Haloacetate dehalogenase H-2 (dehH2).